A 263-amino-acid chain; its full sequence is HTH-type transcriptional repressor NanR (263 aa).

Residues 1 to 24 (MSPMNAFDSQTEDSSPAIGRNLRS) are disordered. In terms of domain architecture, HTH gntR-type spans 30–98 (KKLSEMVEEE…NGERARVSRP (69 aa)). A DNA-binding region (H-T-H motif) is located at residues 58–77 (ERELMAFFNVGRPSVREALA).

Belongs to the NanR family.

In terms of biological role, transcriptional repressor that controls expression of the genes required for the catabolism of sialic acids. The sequence is that of HTH-type transcriptional repressor NanR from Escherichia coli O127:H6 (strain E2348/69 / EPEC).